A 334-amino-acid polypeptide reads, in one-letter code: Beta-hexosaminidase (334 aa).

Substrate is bound by residues aspartate 60, arginine 68, arginine 133, and 163–164; that span reads KH. Histidine 176 acts as the Proton donor/acceptor in catalysis. The active-site Nucleophile is aspartate 247.

It belongs to the glycosyl hydrolase 3 family. NagZ subfamily.

The protein localises to the cytoplasm. It carries out the reaction Hydrolysis of terminal non-reducing N-acetyl-D-hexosamine residues in N-acetyl-beta-D-hexosaminides.. It participates in cell wall biogenesis; peptidoglycan recycling. In terms of biological role, plays a role in peptidoglycan recycling by cleaving the terminal beta-1,4-linked N-acetylglucosamine (GlcNAc) from peptide-linked peptidoglycan fragments, giving rise to free GlcNAc, anhydro-N-acetylmuramic acid and anhydro-N-acetylmuramic acid-linked peptides. This Xanthomonas axonopodis pv. citri (strain 306) protein is Beta-hexosaminidase.